A 442-amino-acid polypeptide reads, in one-letter code: Transposase InsG for insertion sequence element IS4 (442 aa).

It belongs to the transposase 11 family.

Its function is as follows. Involved in the transposition of the insertion sequence IS4. This chain is Transposase InsG for insertion sequence element IS4 (insG), found in Escherichia coli (strain K12).